The chain runs to 471 residues: MKIKTRFAPSPTGYLHVGGARTALYSWLFARNHGGEFVLRIEDTDLERSTPEAIEAIMDGMNWLSLEWDEGPYYQTKRFDRYNAVIDQMLEEGTAYKCYCSKERLEALREEQMAKGEKPRYDGRCRHSHEHHADDEPCVVRFANPQEGSVVFDDQIRGPIEFSNQELDDLIIRRTDGSPTYNFCVVVDDWDMEITHVIRGEDHINNTPRQINILKALKAPVPVYAHVSMINGDDGKKLSKRHGAVSVMQYRDDGYLPEALLNYLVRLGWSHGDQEIFTREEMIKYFTLNAVSKSASAFNTDKLLWLNHHYINALPPEYVATHLQWHIEQENIDTRNGPQLADLVKLLGERCKTLKEMAQSCRYFYEDFAEFDADAAKKHLRPVARQPLEVVRDKLTAITDWTAENVHHAIQATADELEVGMGKVGMPLRVAVTGAGQSPALDVTVHAIGKTRSIERINKALAFIAERENQH.

The 'HIGH' region motif lies at 9–19 (PSPTGYLHVGG). Residues Cys-98, Cys-100, Cys-125, and His-127 each coordinate Zn(2+). The 'KMSKS' region signature appears at 237 to 241 (KLSKR). Lys-240 provides a ligand contact to ATP.

The protein belongs to the class-I aminoacyl-tRNA synthetase family. Glutamate--tRNA ligase type 1 subfamily. Monomer. Zn(2+) is required as a cofactor.

It is found in the cytoplasm. The enzyme catalyses tRNA(Glu) + L-glutamate + ATP = L-glutamyl-tRNA(Glu) + AMP + diphosphate. Its function is as follows. Catalyzes the attachment of glutamate to tRNA(Glu) in a two-step reaction: glutamate is first activated by ATP to form Glu-AMP and then transferred to the acceptor end of tRNA(Glu). The sequence is that of Glutamate--tRNA ligase from Escherichia coli O1:K1 / APEC.